A 181-amino-acid chain; its full sequence is ATP-dependent protease subunit HslV (181 aa).

The active site involves Thr7. Gly164, Cys167, and Thr170 together coordinate Na(+).

It belongs to the peptidase T1B family. HslV subfamily. As to quaternary structure, a double ring-shaped homohexamer of HslV is capped on each side by a ring-shaped HslU homohexamer. The assembly of the HslU/HslV complex is dependent on binding of ATP.

The protein localises to the cytoplasm. It carries out the reaction ATP-dependent cleavage of peptide bonds with broad specificity.. With respect to regulation, allosterically activated by HslU binding. Its function is as follows. Protease subunit of a proteasome-like degradation complex believed to be a general protein degrading machinery. This chain is ATP-dependent protease subunit HslV, found in Shouchella clausii (strain KSM-K16) (Alkalihalobacillus clausii).